Here is a 253-residue protein sequence, read N- to C-terminus: E3 ubiquitin-protein ligase MARCHF3 (253 aa).

The RING-CH-type zinc-finger motif lies at 63–123 (SPFNDRPMCR…ELCHFRFAVE (61 aa)). Residues Cys-71, Cys-74, Cys-87, Cys-89, His-97, Cys-100, Cys-113, and Cys-116 each coordinate Zn(2+). Transmembrane regions (helical) follow at residues 145–165 (LFGDMVCFLFITPLATISGWL) and 182–202 (AVGLIALTVALFTIYLFWTLV). A phosphoserine mark is found at Ser-237 and Ser-243.

In terms of assembly, interacts with MARCHF2 and STX6. In terms of tissue distribution, expressed predominantly in lung, colon and spleen. Present in liver (at protein level).

The protein localises to the cytoplasmic vesicle membrane. Its subcellular location is the early endosome membrane. The catalysed reaction is S-ubiquitinyl-[E2 ubiquitin-conjugating enzyme]-L-cysteine + [acceptor protein]-L-lysine = [E2 ubiquitin-conjugating enzyme]-L-cysteine + N(6)-ubiquitinyl-[acceptor protein]-L-lysine.. It functions in the pathway protein modification; protein ubiquitination. Its function is as follows. E3 ubiquitin-protein ligase which may be involved in endosomal trafficking. E3 ubiquitin ligases accept ubiquitin from an E2 ubiquitin-conjugating enzyme in the form of a thioester and then directly transfer the ubiquitin to targeted substrates. In Rattus norvegicus (Rat), this protein is E3 ubiquitin-protein ligase MARCHF3 (Marchf3).